A 535-amino-acid chain; its full sequence is Phosphoenolpyruvate carboxykinase (ATP) 1 (535 aa).

Residues Arg-58, Tyr-193, and Lys-199 each contribute to the substrate site. ATP contacts are provided by residues Lys-199, His-218, and 234–242; that span reads GLSGTGKTT. Mn(2+) is bound by residues Lys-199 and His-218. Residue Asp-255 participates in Mn(2+) binding. ATP is bound by residues Glu-283, Arg-321, 440 to 441, and Thr-446; that span reads RI. Arg-321 contributes to the substrate binding site.

This sequence belongs to the phosphoenolpyruvate carboxykinase (ATP) family. Mn(2+) is required as a cofactor.

The protein resides in the cytoplasm. It catalyses the reaction oxaloacetate + ATP = phosphoenolpyruvate + ADP + CO2. The protein operates within carbohydrate biosynthesis; gluconeogenesis. In terms of biological role, involved in the gluconeogenesis. Catalyzes the conversion of oxaloacetate (OAA) to phosphoenolpyruvate (PEP) through direct phosphoryl transfer between the nucleoside triphosphate and OAA. The protein is Phosphoenolpyruvate carboxykinase (ATP) 1 of Salinibacter ruber (strain DSM 13855 / M31).